We begin with the raw amino-acid sequence, 103 residues long: Cell division protein CrgA (103 aa).

The next 2 membrane-spanning stretches (helical) occupy residues 49 to 69 (FVPL…VYYL) and 80 to 100 (IGAW…LMTM).

It belongs to the CrgA family.

The protein resides in the cell membrane. Involved in cell division. This Bifidobacterium longum (strain NCC 2705) protein is Cell division protein CrgA.